Consider the following 379-residue polypeptide: Homoserine O-succinyltransferase (379 aa).

The 310-residue stretch at N51–L360 folds into the AB hydrolase-1 domain. Residue S157 is the Nucleophile of the active site. R227 contacts substrate. Catalysis depends on residues D323 and H356. Residue D357 coordinates substrate.

Belongs to the AB hydrolase superfamily. MetX family. In terms of assembly, homodimer.

The protein localises to the cytoplasm. It catalyses the reaction L-homoserine + succinyl-CoA = O-succinyl-L-homoserine + CoA. It participates in amino-acid biosynthesis; L-methionine biosynthesis via de novo pathway; O-succinyl-L-homoserine from L-homoserine: step 1/1. Its function is as follows. Transfers a succinyl group from succinyl-CoA to L-homoserine, forming succinyl-L-homoserine. This Ectopseudomonas mendocina (strain ymp) (Pseudomonas mendocina) protein is Homoserine O-succinyltransferase.